The following is a 240-amino-acid chain: Bidirectional sugar transporter SWEET5 (240 aa).

Topologically, residues 1 to 9 (MTDPHTART) are extracellular. The chain crosses the membrane as a helical span at residues 10–30 (IVGIVGNVISFGLFCAPIPTM). The MtN3/slv 1 domain maps to 10–95 (IVGIVGNVIS…YVTIFFVFAT (86 aa)). The Cytoplasmic portion of the chain corresponds to 31–45 (VKIWKMKSVSEFKPD). The helical transmembrane segment at 46-66 (PYVATVLNCMMWTFYGLPFVQ) threads the bilayer. Over 67–72 (PDSLLV) the chain is Extracellular. Residues 73–93 (ITINGTGLFMELVYVTIFFVF) form a helical membrane-spanning segment. At 94–103 (ATSPVRRKIT) the chain is on the cytoplasmic side. A helical transmembrane segment spans residues 104–124 (IAMVIEVIFMAVVIFCTMYFL). Topologically, residues 125 to 131 (HTTKQRS) are extracellular. The chain crosses the membrane as a helical span at residues 132 to 152 (MLIGILCIVFNVIMYAAPLTV). The region spanning 133–217 (LIGILCIVFN…IIYITYYKTT (85 aa)) is the MtN3/slv 2 domain. At 153–165 (MKLVIKTKSVKYM) the chain is on the cytoplasmic side. The helical transmembrane segment at 166 to 186 (PFFLSLANFMNGVVWVIYACL) threads the bilayer. Residues 187–190 (KFDP) are Extracellular-facing. A helical transmembrane segment spans residues 191–211 (YILIPNGLGSLSGIIQLIIYI). At 212 to 240 (TYYKTTNWNDDDEDKEKRYSNAGIELGQA) the chain is on the cytoplasmic side.

The protein belongs to the SWEET sugar transporter family. Forms homooligomers and heterooligomers with SWEET6, SWEET8, SWEET9, SWEET11 and SWEET12.

The protein localises to the cell membrane. In terms of biological role, mediates both low-affinity uptake and efflux of sugar across the plasma membrane. May play roles in nurturing the male gametophyte. The protein is Bidirectional sugar transporter SWEET5 of Arabidopsis thaliana (Mouse-ear cress).